A 176-amino-acid polypeptide reads, in one-letter code: Peptide methionine sulfoxide reductase MsrA (176 aa).

The active site involves Cys12.

This sequence belongs to the MsrA Met sulfoxide reductase family.

It carries out the reaction L-methionyl-[protein] + [thioredoxin]-disulfide + H2O = L-methionyl-(S)-S-oxide-[protein] + [thioredoxin]-dithiol. The enzyme catalyses [thioredoxin]-disulfide + L-methionine + H2O = L-methionine (S)-S-oxide + [thioredoxin]-dithiol. In terms of biological role, has an important function as a repair enzyme for proteins that have been inactivated by oxidation. Catalyzes the reversible oxidation-reduction of methionine sulfoxide in proteins to methionine. The polypeptide is Peptide methionine sulfoxide reductase MsrA (Thermus thermophilus (strain ATCC BAA-163 / DSM 7039 / HB27)).